The following is a 512-amino-acid chain: Phosphoenolpyruvate carboxylase (512 aa).

Belongs to the PEPCase type 2 family. As to quaternary structure, homotetramer. The cofactor is Mg(2+).

It catalyses the reaction oxaloacetate + phosphate = phosphoenolpyruvate + hydrogencarbonate. Functionally, catalyzes the irreversible beta-carboxylation of phosphoenolpyruvate (PEP) to form oxaloacetate (OAA), a four-carbon dicarboxylic acid source for the tricarboxylic acid cycle. In Caldivirga maquilingensis (strain ATCC 700844 / DSM 13496 / JCM 10307 / IC-167), this protein is Phosphoenolpyruvate carboxylase.